The primary structure comprises 513 residues: Glutamate--tRNA ligase 2 (513 aa).

The 'HIGH' region motif lies at 11 to 21; the sequence is PSPTGFLHIGS. A 'KMSKS' region motif is present at residues 240-244; it reads KLSKR. An ATP-binding site is contributed by lysine 243. An RPE1 insert domain is found at 335–383; the sequence is NTLLRHLPYREEFGGNTERSTAAYIDIREDASTGLTYKLPLAVELPKKF.

The protein belongs to the class-I aminoacyl-tRNA synthetase family. Glutamate--tRNA ligase type 1 subfamily. Monomer.

Its subcellular location is the cytoplasm. The enzyme catalyses tRNA(Glu) + L-glutamate + ATP = L-glutamyl-tRNA(Glu) + AMP + diphosphate. In terms of biological role, catalyzes the attachment of glutamate to tRNA(Glu) in a two-step reaction: glutamate is first activated by ATP to form Glu-AMP and then transferred to the acceptor end of tRNA(Glu). The protein is Glutamate--tRNA ligase 2 of Rickettsia conorii (strain ATCC VR-613 / Malish 7).